The chain runs to 95 residues: Oxytetracycline polyketide synthase acyl carrier protein (95 aa).

The Carrier domain maps to 3–81; it reads LLTLSDLLTL…ALIEMTNASL (79 aa). S41 carries the O-(pantetheine 4'-phosphoryl)serine modification.

4'-phosphopantetheine is transferred from CoA to a specific serine of the apo-ACP-like protein.

It participates in antibiotic biosynthesis; oxytetracycline biosynthesis. Acyl carrier protein. This chain is Oxytetracycline polyketide synthase acyl carrier protein, found in Streptomyces rimosus.